The chain runs to 658 residues: Deoxynucleoside triphosphate triphosphohydrolase SAMHD1 (658 aa).

The tract at residues serine 23 to aspartate 68 is disordered. Serine 49 is modified (phosphoserine). Threonine 52 carries the post-translational modification Phosphothreonine. Residue serine 55 is modified to Phosphoserine. Phosphothreonine is present on threonine 56. A phosphoserine mark is found at serine 64 and serine 125. The 66-residue stretch at tryptophan 77 to serine 142 folds into the SAM domain. The GTP site is built by lysine 148 and valine 149. Asparagine 151 contributes to the dGTP binding site. The GTP site is built by aspartate 169, glutamine 174, and arginine 177. Leucine 182 and valine 188 together coordinate dGTP. The 153-residue stretch at arginine 196–phenylalanine 348 folds into the HD domain. Mn(2+) contacts are provided by histidine 199, histidine 238, and aspartate 239. DGTP contacts are provided by aspartate 239, histidine 247, histidine 265, and glutamate 266. The active site involves histidine 265. Aspartate 343 serves as a coordination point for Mn(2+). Residues tyrosine 347, aspartate 351, arginine 365, arginine 395, lysine 397, asparagine 401, tyrosine 417, histidine 419, and lysine 420 each coordinate dGTP. GTP contacts are provided by arginine 494 and lysine 498. Lysine 509 participates in a covalent cross-link: Glycyl lysine isopeptide (Lys-Gly) (interchain with G-Cter in SUMO2). Lysine 565 contributes to the GTP binding site. Lysine 565 lines the dGTP pocket. Position 634 is a phosphothreonine (threonine 634). A (Microbial infection) Phosphothreonine modification is found at threonine 634.

This sequence belongs to the SAMHD1 family. As to quaternary structure, homodimer; in absence of GTP and dNTP. Homotetramer; in GTP- and dNTP-bound form. Interacts with MRE11; leading to stimulate the exonuclease activity of MRE11. Interacts with RBBP8/CtIP. Interacts with RBBP8/CtIP. Interacts (via its C-terminus) with CD81. Zn(2+) is required as a cofactor. Post-translationally, phosphorylation at Thr-634 by CDK1 acts as a switch to control deoxynucleoside triphosphate (dNTPase)-dependent and -independent functions. Phosphorylation at Thr-634 takes place in cycling cells: it reduces the stability of the homotetramer, impairing the dNTPase activity and subsequent ability to restrict infection by viruses. It also inhibits ability to suppress LINE-1 retrotransposon activity. In contrast, phosphorylation at Thr-634 promotes DNA end resection at stalled replication forks in response to DNA damage. (Microbial infection) Phosphorylation at Thr-634 by mouse cytomegalovirus kinase M97 leads to a reduced level of dNTP hydrolase activity and the loss of viral restriction. In terms of processing, not phosphorylated by CDK1 at the C-terminus.

Its subcellular location is the nucleus. The protein resides in the chromosome. The catalysed reaction is a 2'-deoxyribonucleoside 5'-triphosphate + H2O = a 2'-deoxyribonucleoside + triphosphate + H(+). The enzyme catalyses dATP + H2O = 2'-deoxyadenosine + triphosphate + H(+). It catalyses the reaction dCTP + H2O = 2'-deoxycytidine + triphosphate + H(+). It carries out the reaction dGTP + H2O = 2'-deoxyguanosine + triphosphate + H(+). The catalysed reaction is dTTP + H2O = thymidine + triphosphate + H(+). Allosterically activated and regulated via the combined actions of GTP and dNTPs (dATP, dGTP, dTTP and dCTP): Allosteric site 1 binds GTP, while allosteric site 2 binds dNTP. Allosteric activation promotes the formation of highly active homotetramers. Isoform 1: Phosphorylation at Thr-634 impairs homotetramerization, thereby inhibiting dNTPase activity, leading to reduced ability to restrict infection by viruses. In terms of biological role, protein that acts both as a host restriction factor involved in defense response to virus and as a regulator of DNA end resection at stalled replication forks. Has deoxynucleoside triphosphate (dNTPase) activity, which is required to restrict infection by viruses: dNTPase activity reduces cellular dNTP levels to levels too low for retroviral reverse transcription to occur, blocking early-stage virus replication in dendritic and other myeloid cells. Likewise, suppresses LINE-1 retrotransposon activity. In addition to virus restriction, dNTPase activity acts as a regulator of DNA precursor pools by regulating dNTP pools. Phosphorylation at Thr-634 acts as a switch to control dNTPase-dependent and -independent functions: it inhibits dNTPase activity and ability to restrict infection by viruses, while it promotes DNA end resection at stalled replication forks. Functions during S phase at stalled DNA replication forks to promote the resection of gapped or reversed forks: acts by stimulating the exonuclease activity of MRE11, activating the ATR-CHK1 pathway and allowing the forks to restart replication. Its ability to promote degradation of nascent DNA at stalled replication forks is required to prevent induction of type I interferons, thereby preventing chronic inflammation. Ability to promote DNA end resection at stalled replication forks is independent of dNTPase activity. Enhances immunoglobulin hypermutation in B-lymphocytes by promoting transversion mutation. The polypeptide is Deoxynucleoside triphosphate triphosphohydrolase SAMHD1 (Mus musculus (Mouse)).